The primary structure comprises 234 residues: N-(5'-phosphoribosyl)anthranilate isomerase (234 aa).

The tract at residues 211-234 (RAASSSPRPVDGESPAFQRSEKAG) is disordered.

It belongs to the TrpF family.

The enzyme catalyses N-(5-phospho-beta-D-ribosyl)anthranilate = 1-(2-carboxyphenylamino)-1-deoxy-D-ribulose 5-phosphate. Its pathway is amino-acid biosynthesis; L-tryptophan biosynthesis; L-tryptophan from chorismate: step 3/5. This chain is N-(5'-phosphoribosyl)anthranilate isomerase, found in Afipia carboxidovorans (strain ATCC 49405 / DSM 1227 / KCTC 32145 / OM5) (Oligotropha carboxidovorans).